The chain runs to 573 residues: Sulfate adenylyltransferase (573 aa).

The segment at 1-169 (MANSPHGGVL…LEAVNRLQHY (169 aa)) is N-terminal. The segment at 170–394 (DFVELRYTPS…LRESHPPRSQ (225 aa)) is catalytic. Gln197 contacts sulfate. ATP is bound by residues 197-200 (QTRN) and 291-294 (GRDH). Residues Thr198, Arg199, and Asn200 contribute to the active site. Position 199 (Arg199) interacts with sulfate. Ala295 serves as a coordination point for sulfate. Met333 is a binding site for ATP. Residues 395 to 573 (QGFTIFLTGY…LESQGLLDRF (179 aa)) are allosteric regulation domain; adenylyl-sulfate kinase-like. 3'-phosphoadenylyl sulfate contacts are provided by residues 434 to 437 (ETVR), Arg451, 477 to 478 (IA), and Arg515.

This sequence in the N-terminal section; belongs to the sulfate adenylyltransferase family. In the C-terminal section; belongs to the APS kinase family. Homohexamer. Dimer of trimers.

Its subcellular location is the cytoplasm. It catalyses the reaction sulfate + ATP + H(+) = adenosine 5'-phosphosulfate + diphosphate. The protein operates within sulfur metabolism; hydrogen sulfide biosynthesis; sulfite from sulfate: step 1/3. Its activity is regulated as follows. Allosterically inhibited by 3'-phosphoadenosine 5'-phosphosulfate (PAPS). Catalyzes the first intracellular reaction of sulfate assimilation, forming adenosine-5'-phosphosulfate (APS) from inorganic sulfate and ATP. Plays an important role in sulfate activation as a component of the biosynthesis pathway of sulfur-containing amino acids. The polypeptide is Sulfate adenylyltransferase (Chaetomium globosum (strain ATCC 6205 / CBS 148.51 / DSM 1962 / NBRC 6347 / NRRL 1970) (Soil fungus)).